The chain runs to 620 residues: Sodium-dependent dopamine transporter (620 aa).

At 1 to 56 (MSKSKCSVGLMSSVVAPAKEPNAMGPKEVELILVKEQNGVQLTSSTLTNPRQSPVE) the chain is on the cytoplasmic side. The chain crosses the membrane as a discontinuously helical span at residues 57–95 (AQDRETWGKKIDFLLSVIGFAVDLANVWRFPYLCYKNGG). Na(+) is bound by residues glycine 75, alanine 77, valine 78, aspartate 79, and asparagine 82. Aspartate 79 lines the dopamine pocket. 2 helical membrane-spanning segments follow: residues 96-127 (GAFL…NREG) and 128-171 (AAGV…FSSF). Positions 149 and 153 each coordinate dopamine. At 172–236 (TTELPWIHCN…SHGIDDLGPP (65 aa)) the chain is on the extracellular side. Cysteine 180 and cysteine 189 are disulfide-bonded. Asparagine 181, asparagine 188, and asparagine 205 each carry an N-linked (GlcNAc...) asparagine glycan. Transmembrane regions (helical) follow at residues 237-256 (RWQL…FSLW) and 257-287 (KGVK…GVTL). Residues 288–306 (PGAIDGIRAYLSVDFYRLC) lie on the Extracellular side of the membrane. The chain crosses the membrane as a discontinuously helical span at residues 307–335 (EASVWIDAATQVCFSLGVGFGVLIAFSSY). Glutamine 317 lines the chloride pocket. Phenylalanine 320 is a binding site for dopamine. Serine 321 and asparagine 353 together coordinate Na(+). A chloride-binding site is contributed by serine 321. The chain crosses the membrane as a helical span at residues 336–376 (NKFTNNCYRDAIVTTSINSLTSFSSGFVVFSFLGYMAQKHS). Serine 357 is a chloride binding site. At 377 to 400 (VPIGDVAKDGPGLIFIIYPEAIAT) the chain is on the extracellular side. The next 3 helical transmembrane spans lie at 401 to 442 (LPLS…QLLH), 443 to 466 (RHRE…CVTN), and 467 to 499 (GGIY…AWFY). The Na(+) site is built by leucine 418, aspartate 421, and serine 422. Residues serine 422 and alanine 423 each contribute to the dopamine site. Residues 500-516 (GVGQFSDDIQQMTGQRP) lie on the Cytoplasmic side of the membrane. A helical transmembrane segment spans residues 517-542 (SLYWRLCWKLVSPCFLLFVVVVSIVT). Residues 543–553 (FRPPHYGAYIF) lie on the Extracellular side of the membrane. The chain crosses the membrane as a helical span at residues 554-583 (PDWANALGWVIATSSMAMVPIYAAYKFCSL). The interaction with TGFB1I1 stretch occupies residues 561-590 (GWVIATSSMAMVPIYAAYKFCSLPGSFREK). Residues 584–620 (PGSFREKLAYAIAPEKDRELVDRGEVRQFTLRHWLKV) lie on the Cytoplasmic side of the membrane.

It belongs to the sodium:neurotransmitter symporter (SNF) (TC 2.A.22) family. SLC6A3 subfamily. Monomer. Homooligomer; disulfide-linked. Interacts with PRKCABP and TGFB1I1. Interacts (via N-terminus) with SYNGR3 (via N-terminus). Interacts with SLC18A2. Interacts with TOR1A (ATP-bound); TOR1A regulates SLC6A3 subcellular location. Interacts with alpha-synuclein/SNCA. Interacts with SEPTIN4.

The protein resides in the cell membrane. It is found in the cell projection. Its subcellular location is the neuron projection. The protein localises to the axon. The catalysed reaction is dopamine(out) + chloride(out) + Na(+)(out) = dopamine(in) + chloride(in) + Na(+)(in). It catalyses the reaction (R)-noradrenaline(out) + chloride(out) + Na(+)(out) = (R)-noradrenaline(in) + chloride(in) + Na(+)(in). It carries out the reaction dopamine(out) + chloride(out) + 2 Na(+)(out) = dopamine(in) + chloride(in) + 2 Na(+)(in). Inhibited by zinc ions. Mediates sodium- and chloride-dependent transport of dopamine. Also mediates sodium- and chloride-dependent transport of norepinephrine (also known as noradrenaline). Regulator of light-dependent retinal hyaloid vessel regression, downstream of OPN5 signaling. This Macaca fascicularis (Crab-eating macaque) protein is Sodium-dependent dopamine transporter (SLC6A3).